The sequence spans 156 residues: Small ribosomal subunit protein uS7 (156 aa).

The protein belongs to the universal ribosomal protein uS7 family. In terms of assembly, part of the 30S ribosomal subunit. Contacts proteins S9 and S11.

Functionally, one of the primary rRNA binding proteins, it binds directly to 16S rRNA where it nucleates assembly of the head domain of the 30S subunit. Is located at the subunit interface close to the decoding center, probably blocks exit of the E-site tRNA. In Afipia carboxidovorans (strain ATCC 49405 / DSM 1227 / KCTC 32145 / OM5) (Oligotropha carboxidovorans), this protein is Small ribosomal subunit protein uS7.